Here is a 309-residue protein sequence, read N- to C-terminus: MQSDDIIWDVINKNFCSFKTTFNKTKFCKNEYNVTGVCNKVSCPLANSRYATVREEEGVCYLYMKTVERAHTPNRLWEKIKLDPNFMKAIEQIDSHLEFWPGHMSHRVKQRYIRITQYLIRMRKMRKQIKRELVPIKKKAERRDATRENKALIAAHLTTNIKKELLERLNKGTYADMHYFPEDIINNVLEKEGEADQFSEEEADENEEEGEEEMEEEFEDDIDDIEDAGGAFEYVEGDDDEDDIDDEYENEPYQDDDEEDDDDDDDDDEEVKPQITKKRGPTFKPTKKTPQKRVHMEVEIEEETENQAN.

Positions 194–309 are disordered; sequence EADQFSEEEA…IEEETENQAN (116 aa). Composition is skewed to acidic residues over residues 195-227 and 235-270; these read ADQF…DIED and VEGD…DDEE. Residues 275 to 293 are compositionally biased toward basic residues; the sequence is ITKKRGPTFKPTKKTPQKR. A compositionally biased stretch (acidic residues) spans 299–309; it reads EIEEETENQAN.

This sequence belongs to the MAK16 family.

It localises to the nucleus. Its subcellular location is the nucleolus. This chain is Protein MAK16 homolog (mak16l), found in Dictyostelium discoideum (Social amoeba).